Here is a 441-residue protein sequence, read N- to C-terminus: Transcriptional regulatory protein ZraR (441 aa).

Positions 7–121 (DILVVDDDIS…NLQATLEKAL (115 aa)) constitute a Response regulatory domain. A 4-aspartylphosphate modification is found at Asp-56. The Sigma-54 factor interaction domain maps to 141-370 (MVGKSPAMQH…LENAVERAVV (230 aa)). ATP-binding residues include Gly-172, Thr-173, Arg-329, and Arg-359. Residues 421–440 (KTEAARQLGITRKTLLAKLS) constitute a DNA-binding region (H-T-H motif).

In terms of processing, phosphorylated by ZraS.

It is found in the cytoplasm. Activity of the ZraS/ZraR two-component system is repressed by the zinc-bound form of ZraP, which probably interacts with the periplasmic region of ZraS. Its function is as follows. Part of the Zra signaling pathway, an envelope stress response (ESR) system composed of the periplasmic accessory protein ZraP, the histidine kinase ZraS and the transcriptional regulator ZraR. The ZraPSR system contributes to antibiotic resistance and is important for membrane integrity in the presence of membrane-targeting biocides. ZraR is a member of the two-component regulatory system ZraS/ZraR. When activated by ZraS, acts in conjunction with sigma-54 to regulate the expression of zraP in the presence of high Zn(2+) or Pb(2+) concentrations. Also positively autoregulates the expression of the zraSR operon. The polypeptide is Transcriptional regulatory protein ZraR (zraR) (Escherichia coli O157:H7).